The primary structure comprises 218 residues: 3,4-dihydroxy-2-butanone 4-phosphate synthase (218 aa).

D-ribulose 5-phosphate contacts are provided by residues 38–39, Asp-43, 151–155, and Glu-175; these read RE and RRGHT. Glu-39 lines the Mg(2+) pocket. His-154 is a Mg(2+) binding site.

Belongs to the DHBP synthase family. Homodimer. Mg(2+) serves as cofactor. Mn(2+) is required as a cofactor.

It carries out the reaction D-ribulose 5-phosphate = (2S)-2-hydroxy-3-oxobutyl phosphate + formate + H(+). Its pathway is cofactor biosynthesis; riboflavin biosynthesis; 2-hydroxy-3-oxobutyl phosphate from D-ribulose 5-phosphate: step 1/1. Catalyzes the conversion of D-ribulose 5-phosphate to formate and 3,4-dihydroxy-2-butanone 4-phosphate. This Vibrio vulnificus (strain CMCP6) protein is 3,4-dihydroxy-2-butanone 4-phosphate synthase.